Consider the following 4540-residue polypeptide: Dynein heavy chain, cytoplasmic (4540 aa).

A stem region spans residues 1 to 1796; that stretch reads MEESETQLNV…LIQMGNAQFH (1796 aa). Coiled-coil stretches lie at residues 440–482, 698–722, 794–827, 975–995, 1169–1251, and 1295–1311; these read EHIK…NVQQ, RVNYEKKLSQLFKEVRNLSNMKTKV, VKKFTDKVFELEQAVNGLNERIGQIESLCEAMKT, QQLIKDAYSQIGQLLEDMEQY, RSKK…LKMD, and QNKKIKDTCDEAQKQLN. 4 AAA regions span residues 1797–2018, 2091–2348, 2457–2705, and 2796–3056; these read YGFE…VLNS, KELA…FTRI, EIDP…WKYA, and QFNE…AKRF. ATP contacts are provided by residues 1835–1842, 2129–2136, 2496–2503, and 2834–2841; these read GPAGTGKT, GPCGCGKS, GPPGSGKT, and GSSGVGKT. 4 coiled-coil regions span residues 3076–3182, 3289–3367, 3653–3688, and 3820–3851; these read NEKK…NAKQ, QLKY…RSQA, EDEKVIQTLEKLKKEAAVIVQEMKQADTIMNEVMNT, and QQLKQLEGITQQNQTFNRLIDNLNKNEDRWLN. The interval 3076–3367 is stalk; it reads NEKKSQLEDQ…VQEKVTRSQA (292 aa). Residues 3140-3159 are disordered; sequence KKKEDSTRLSSDAEKKAKEM. The segment at 3444–3673 is AAA 5; it reads LSRPSDRLNW…LKKEAAVIVQ (230 aa). The interval 3908–4123 is AAA 6; it reads ARKLINQILG…QRCSLDLIDE (216 aa). Coiled coils occupy residues 4238–4259 and 4313–4342; these read QKLITKVQNLQQEGEEEITQIE and RFLDREITVASKLLKAVRQNIEELIQLAQG.

The protein belongs to the dynein heavy chain family. In terms of assembly, consists of at least two heavy chains and a number of intermediate and light chains.

Its subcellular location is the cytoplasm. It is found in the cytoskeleton. In terms of biological role, cytoplasmic dynein acts as a motor for the intracellular retrograde motility of vesicles and organelles along microtubules. Dynein has ATPase activity; the force-producing power stroke is thought to occur on release of ADP. This chain is Dynein heavy chain, cytoplasmic (DHC-8), found in Paramecium tetraurelia.